The following is a 1265-amino-acid chain: DNA-directed RNA polymerase subunit beta'' (1265 aa).

The Zn(2+) site is built by Cys223, Cys297, Cys304, and Cys307.

The protein belongs to the RNA polymerase beta' chain family. RpoC2 subfamily. As to quaternary structure, in plastids the minimal PEP RNA polymerase catalytic core is composed of four subunits: alpha, beta, beta', and beta''. When a (nuclear-encoded) sigma factor is associated with the core the holoenzyme is formed, which can initiate transcription. It depends on Zn(2+) as a cofactor.

The protein localises to the plastid. The protein resides in the cyanelle. It carries out the reaction RNA(n) + a ribonucleoside 5'-triphosphate = RNA(n+1) + diphosphate. In terms of biological role, DNA-dependent RNA polymerase catalyzes the transcription of DNA into RNA using the four ribonucleoside triphosphates as substrates. The chain is DNA-directed RNA polymerase subunit beta'' from Cyanophora paradoxa.